The sequence spans 395 residues: Altered inheritance of mitochondria protein 39, mitochondrial (395 aa).

The chain crosses the membrane as a helical span at residues 156–176 (QIWSAIFGGIFGVILGYSLIY).

The protein belongs to the AIM39 family.

The protein resides in the mitochondrion membrane. In Saccharomyces cerevisiae (strain JAY291) (Baker's yeast), this protein is Altered inheritance of mitochondria protein 39, mitochondrial (AIM39).